We begin with the raw amino-acid sequence, 1028 residues long: Formin-like protein 3 (1028 aa).

G2 is lipidated: N-myristoyl glycine. The GBD/FH3 domain occupies 26–472 (MPMPEPCELE…EAFQRRCHLE (447 aa)). T95 bears the Phosphothreonine mark. The residue at position 174 (S174) is a Phosphoserine. The segment at 493 to 541 (ELSEGMPPSDLDLLAPAPPPEEVLPLPPPPAPPLPPPPPPLPDKCPPAP) is disordered. A compositionally biased stretch (pro residues) spans 508–541 (PAPPPEEVLPLPPPPAPPLPPPPPPLPDKCPPAP). The FH2 domain maps to 561–951 (IKKPIKTKFR…MREKQLAQEA (391 aa)). Residues 986–1018 (YEGKDGTIEDIITVLKSVPFTARTAKRGSRFFC) enclose the DAD domain. Position 1014 is a phosphoserine (S1014).

This sequence belongs to the formin homology family. Interacts with SRGAP2 (via SH3 domain). As to expression, expressed in endothelial cells.

It localises to the cytoplasm. The protein localises to the cell membrane. Its function is as follows. Plays a role in the regulation of cell morphology and cytoskeletal organization. Required in the control of cell shape and migration. Required for developmental angiogenesis. In this process, required for microtubule reorganization and for efficient endothelial cell elongation. In quiescent endothelial cells, triggers rearrangement of the actin cytoskeleton, but does not alter microtubule alignement. The chain is Formin-like protein 3 (FMNL3) from Homo sapiens (Human).